Here is a 771-residue protein sequence, read N- to C-terminus: Choline transporter-like protein 1 (771 aa).

Residues 96–116 (FLFFVFLCGWVVVAGFGIMWG) form a helical membrane-spanning segment. 2 N-linked (GlcNAc...) asparagine glycosylation sites follow: Asn141 and Asn259. 4 consecutive transmembrane segments (helical) span residues 312-332 (WWQT…WTVI), 335-355 (LLGS…LGFG), 392-412 (LVVA…ILFI), and 441-461 (LFPF…AIWL). A glycan (N-linked (GlcNAc...) asparagine) is linked at Asn480. Transmembrane regions (helical) follow at residues 514-534 (LFAF…ALAG), 566-586 (LGSI…RVLL), 603-623 (WFLM…KFLT), 662-682 (AGIL…ILSF), and 701-721 (YYFV…DLFF).

This sequence belongs to the CTL (choline transporter-like) family.

The protein resides in the membrane. This Caenorhabditis elegans protein is Choline transporter-like protein 1 (chtl-1).